A 197-amino-acid polypeptide reads, in one-letter code: ATP-dependent Clp protease proteolytic subunit 3 (197 aa).

The Nucleophile role is filled by Ser96. Residue His121 is part of the active site.

It belongs to the peptidase S14 family. In terms of assembly, fourteen ClpP subunits assemble into 2 heptameric rings which stack back to back to give a disk-like structure with a central cavity, resembling the structure of eukaryotic proteasomes.

The protein resides in the cytoplasm. It carries out the reaction Hydrolysis of proteins to small peptides in the presence of ATP and magnesium. alpha-casein is the usual test substrate. In the absence of ATP, only oligopeptides shorter than five residues are hydrolyzed (such as succinyl-Leu-Tyr-|-NHMec, and Leu-Tyr-Leu-|-Tyr-Trp, in which cleavage of the -Tyr-|-Leu- and -Tyr-|-Trp bonds also occurs).. Cleaves peptides in various proteins in a process that requires ATP hydrolysis. Has a chymotrypsin-like activity. Plays a major role in the degradation of misfolded proteins. This Prochlorococcus marinus (strain MIT 9313) protein is ATP-dependent Clp protease proteolytic subunit 3.